The sequence spans 540 residues: Pentatricopeptide repeat-containing protein At3g29290 (540 aa).

PPR repeat units follow at residues 106–140 (NEET…GLQP), 141–175 (NAHA…ENVT), 177–205 (HTYS…LERE), 213–247 (DVVL…GHIG), 248–282 (TEIT…KISL), 283–317 (REDA…GMKP), 318–352 (NLVA…GHKP), 353–387 (DEYT…NLCC), 389–423 (NEYL…GLTV), 424–458 (STSS…DCKP), 459–487 (NTFT…KKVE), and 489–523 (DVSL…GLEP).

The protein belongs to the PPR family. P subfamily.

The sequence is that of Pentatricopeptide repeat-containing protein At3g29290 (EMB2076) from Arabidopsis thaliana (Mouse-ear cress).